The chain runs to 85 residues: MKVTLIAFLTCAAVLVLHTTAAEELEAESQLMGVGMPDTELAAVDEERLFECSVSCEIEKEGNKDCKKKKCKGGWKCKSNMCVKV.

The N-terminal stretch at 1–22 (MKVTLIAFLTCAAVLVLHTTAA) is a signal peptide. Positions 23–48 (EELEAESQLMGVGMPDTELAAVDEER) are excised as a propeptide. Cystine bridges form between C52–C66, C56–C77, and C71–C82.

This sequence belongs to the neurotoxin 12 (Hwtx-2) family. 02 (Hwtx-2) subfamily. In terms of tissue distribution, expressed by the venom gland.

The protein resides in the secreted. Functionally, postsynaptic neurotoxin. The protein is U4-theraphotoxin-Hhn1l of Cyriopagopus hainanus (Chinese bird spider).